A 394-amino-acid chain; its full sequence is Na(+)/H(+) antiporter NhaA (394 aa).

11 helical membrane-spanning segments follow: residues 24 to 44 (AGLV…SPLA), 58 to 78 (LSVQ…LVGL), 96 to 116 (TLPG…YVML), 126 to 146 (GWAI…SLLG), 155 to 175 (IFLA…IAIF), 180 to 200 (INVA…SLCA), 214 to 234 (AVLW…GVLL), 267 to 287 (VAFA…FASI), 300 to 320 (VAAG…ALMV), 336 to 356 (VLGV…IGLL), and 370 to 390 (GILA…RIAG).

This sequence belongs to the NhaA Na(+)/H(+) (TC 2.A.33) antiporter family.

The protein resides in the cell inner membrane. The catalysed reaction is Na(+)(in) + 2 H(+)(out) = Na(+)(out) + 2 H(+)(in). Functionally, na(+)/H(+) antiporter that extrudes sodium in exchange for external protons. The chain is Na(+)/H(+) antiporter NhaA from Azorhizobium caulinodans (strain ATCC 43989 / DSM 5975 / JCM 20966 / LMG 6465 / NBRC 14845 / NCIMB 13405 / ORS 571).